Consider the following 47-residue polypeptide: Potassium channel toxin gamma-KTx 5.2 (47 aa).

Disulfide bonds link C5–C23, C11–C34, C20–C39, and C24–C41.

This sequence belongs to the ergtoxin family. Gamma-KTx 5 subfamily. In terms of tissue distribution, expressed by the venom gland.

The protein localises to the secreted. Its function is as follows. Reversibly blocks Kv11/ERG potassium channels. This Centruroides gracilis (Slenderbrown scorpion) protein is Potassium channel toxin gamma-KTx 5.2.